Reading from the N-terminus, the 1978-residue chain is Protein MOR1 (1978 aa).

HEAT repeat units lie at residues aspartate 48–serine 86 and isoleucine 165–lysine 202. The segment at alanine 230–valine 264 is disordered. Over residues isoleucine 238 to glutamate 247 the composition is skewed to basic and acidic residues. HEAT repeat units follow at residues glycine 322 to threonine 359, alanine 363 to leucine 400, and lysine 442 to methionine 479. The segment at isoleucine 501–proline 587 is disordered. Residues alanine 510–glycine 527 show a composition bias toward low complexity. Residues glycine 565 to lysine 577 are compositionally biased toward basic and acidic residues. 4 HEAT repeats span residues aspartate 849–lysine 886, proline 890–proline 928, lysine 932–leucine 969, and valine 1008–glutamine 1045. The interval serine 1087–glycine 1115 is disordered. The segment covering isoleucine 1093 to arginine 1107 has biased composition (polar residues). 4 HEAT repeats span residues leucine 1230–alanine 1253, glutamate 1254–glutamine 1286, alanine 1287–threonine 1325, and glycine 1328–alanine 1365. A compositionally biased stretch (basic and acidic residues) spans methionine 1393–glutamate 1403. The segment at methionine 1393 to proline 1431 is disordered. The HEAT 14 repeat unit spans residues arginine 1535–aspartate 1575. Residues alanine 1837–aspartate 1862 are disordered.

This sequence belongs to the TOG/XMAP215 family. In terms of tissue distribution, expressed in roots, cotyledons, rosette leaves, stems, open flowers and green siliques.

It localises to the cytoplasm. It is found in the cytoskeleton. Its subcellular location is the phragmoplast. The protein localises to the spindle. Microtubule-binding protein that is essential for cortical microtubules organization and function. Essential for maintaining the interphase cortical array and for correct morphogenesis. Promotes rapid growth and shrinkage of microtubules and suppresses the pausing of interphase microtubules. Regulates the structure and function of microtubule arrays during mitosis and cytokinesis. Probably not required for cellulose microfibrils alignment in roots. This chain is Protein MOR1 (MOR1), found in Arabidopsis thaliana (Mouse-ear cress).